Here is a 257-residue protein sequence, read N- to C-terminus: Hydroxyacylglutathione hydrolase (257 aa).

His54, His56, Asp58, His59, His110, Asp131, and His169 together coordinate Zn(2+).

This sequence belongs to the metallo-beta-lactamase superfamily. Glyoxalase II family. As to quaternary structure, monomer. Zn(2+) is required as a cofactor.

It catalyses the reaction an S-(2-hydroxyacyl)glutathione + H2O = a 2-hydroxy carboxylate + glutathione + H(+). The protein operates within secondary metabolite metabolism; methylglyoxal degradation; (R)-lactate from methylglyoxal: step 2/2. Thiolesterase that catalyzes the hydrolysis of S-D-lactoyl-glutathione to form glutathione and D-lactic acid. The polypeptide is Hydroxyacylglutathione hydrolase (Hahella chejuensis (strain KCTC 2396)).